We begin with the raw amino-acid sequence, 521 residues long: Probable methylmalonate-semialdehyde/malonate-semialdehyde dehydrogenase [acylating], mitochondrial (521 aa).

Residues F172, K196, E199, R200, and S249 each contribute to the NAD(+) site. The Nucleophile role is filled by C304. E404 contacts NAD(+).

The protein belongs to the aldehyde dehydrogenase family. Homotetramer.

It localises to the mitochondrion. It catalyses the reaction 2-methyl-3-oxopropanoate + NAD(+) + CoA + H2O = propanoyl-CoA + hydrogencarbonate + NADH + H(+). The catalysed reaction is 3-oxopropanoate + NAD(+) + CoA + H2O = hydrogencarbonate + acetyl-CoA + NADH + H(+). Probable malonate and methylmalonate semialdehyde dehydrogenase involved in the catabolism of valine, thymine, and compounds catabolized by way of beta-alanine, including uracil and cytidine. The protein is Probable methylmalonate-semialdehyde/malonate-semialdehyde dehydrogenase [acylating], mitochondrial of Aedes aegypti (Yellowfever mosquito).